We begin with the raw amino-acid sequence, 330 residues long: Aspartate--ammonia ligase (330 aa).

This sequence belongs to the class-II aminoacyl-tRNA synthetase family. AsnA subfamily.

The protein resides in the cytoplasm. The enzyme catalyses L-aspartate + NH4(+) + ATP = L-asparagine + AMP + diphosphate + H(+). Its pathway is amino-acid biosynthesis; L-asparagine biosynthesis; L-asparagine from L-aspartate (ammonia route): step 1/1. The protein is Aspartate--ammonia ligase of Escherichia coli O139:H28 (strain E24377A / ETEC).